Here is a 265-residue protein sequence, read N- to C-terminus: Type III pantothenate kinase (265 aa).

6 to 13 (DVGNTNIV) serves as a coordination point for ATP. 112–115 (GADR) lines the substrate pocket. The Proton acceptor role is filled by D114. D134 contacts K(+). ATP is bound at residue T137. Position 189 (T189) interacts with substrate.

The protein belongs to the type III pantothenate kinase family. As to quaternary structure, homodimer. The cofactor is NH4(+). It depends on K(+) as a cofactor.

Its subcellular location is the cytoplasm. It carries out the reaction (R)-pantothenate + ATP = (R)-4'-phosphopantothenate + ADP + H(+). The protein operates within cofactor biosynthesis; coenzyme A biosynthesis; CoA from (R)-pantothenate: step 1/5. Its function is as follows. Catalyzes the phosphorylation of pantothenate (Pan), the first step in CoA biosynthesis. This chain is Type III pantothenate kinase, found in Saccharopolyspora erythraea (strain ATCC 11635 / DSM 40517 / JCM 4748 / NBRC 13426 / NCIMB 8594 / NRRL 2338).